We begin with the raw amino-acid sequence, 289 residues long: 4-hydroxy-tetrahydrodipicolinate synthase (289 aa).

Position 43 (Thr-43) interacts with pyruvate. The Proton donor/acceptor role is filled by Tyr-131. Catalysis depends on Lys-160, which acts as the Schiff-base intermediate with substrate. Ile-200 lines the pyruvate pocket.

The protein belongs to the DapA family. Homotetramer; dimer of dimers.

It localises to the cytoplasm. It catalyses the reaction L-aspartate 4-semialdehyde + pyruvate = (2S,4S)-4-hydroxy-2,3,4,5-tetrahydrodipicolinate + H2O + H(+). It participates in amino-acid biosynthesis; L-lysine biosynthesis via DAP pathway; (S)-tetrahydrodipicolinate from L-aspartate: step 3/4. In terms of biological role, catalyzes the condensation of (S)-aspartate-beta-semialdehyde [(S)-ASA] and pyruvate to 4-hydroxy-tetrahydrodipicolinate (HTPA). The sequence is that of 4-hydroxy-tetrahydrodipicolinate synthase from Methanococcus vannielii (strain ATCC 35089 / DSM 1224 / JCM 13029 / OCM 148 / SB).